The chain runs to 452 residues: Probable pectate lyase 9 (452 aa).

The signal sequence occupies residues Met-1–Thr-25. 4 N-linked (GlcNAc...) asparagine glycosylation sites follow: Asn-88, Asn-139, Asn-214, and Asn-233. Asp-250 is a binding site for Ca(2+). Asn-271 carries N-linked (GlcNAc...) asparagine glycosylation. Ca(2+) is bound by residues Asp-274 and Asp-278. Residues Asn-281 and Asn-305 are each glycosylated (N-linked (GlcNAc...) asparagine). Arg-330 is an active-site residue. Asn-374 carries an N-linked (GlcNAc...) asparagine glycan.

This sequence belongs to the polysaccharide lyase 1 family. Ca(2+) serves as cofactor.

The catalysed reaction is Eliminative cleavage of (1-&gt;4)-alpha-D-galacturonan to give oligosaccharides with 4-deoxy-alpha-D-galact-4-enuronosyl groups at their non-reducing ends.. Its pathway is glycan metabolism; pectin degradation; 2-dehydro-3-deoxy-D-gluconate from pectin: step 2/5. The sequence is that of Probable pectate lyase 9 from Arabidopsis thaliana (Mouse-ear cress).